Reading from the N-terminus, the 245-residue chain is Transcriptional regulatory protein YpdB (245 aa).

The Response regulatory domain maps to 2-116 (KVIIVEDEFL…RITGMLQKLE (115 aa)). Residue Asp-53 is modified to 4-aspartylphosphate. One can recognise an HTH LytTR-type domain in the interval 140–245 (INLVKDERII…VKEFRQLMHL (106 aa)).

In terms of processing, phosphorylated by YpdA.

It localises to the cytoplasm. Functionally, member of the two-component regulatory system YpdA/YpdB. YpdB regulates expression of yhjX by binding to its promoter region. The polypeptide is Transcriptional regulatory protein YpdB (ypdB) (Escherichia coli O6:H1 (strain CFT073 / ATCC 700928 / UPEC)).